The following is a 133-amino-acid chain: MLFGTYEHCMDAKQRLTLPAKLRNKLSNPIYLTKGYDADLEIWSKDDFLLKIKEILNQQNDQKDIRNIERIIWSNTVEIDIDNLGRIKIPYNLIQNLNIGKDVFILGLGNRLEIWSKNKYNQHKNQFIKNLNS.

SpoVT-AbrB domains lie at 5–47 (TYEH…SKDD) and 76–119 (TVEI…SKNK).

The protein belongs to the MraZ family. As to quaternary structure, forms oligomers.

It is found in the cytoplasm. The protein resides in the nucleoid. This is Transcriptional regulator MraZ from Mycoplasma mycoides subsp. mycoides SC (strain CCUG 32753 / NCTC 10114 / PG1).